We begin with the raw amino-acid sequence, 501 residues long: Vitamin D 25-hydroxylase (501 aa).

A signal peptide spans 1–26 (MWKLWRAEEGAAALGGALFLLLFALG). Alanine 250 contributes to the substrate binding site. Cysteine 448 contributes to the heme binding site.

It belongs to the cytochrome P450 family. In terms of assembly, homodimer. Heme is required as a cofactor.

The protein localises to the endoplasmic reticulum membrane. The protein resides in the microsome membrane. The enzyme catalyses calciol + reduced [NADPH--hemoprotein reductase] + O2 = calcidiol + oxidized [NADPH--hemoprotein reductase] + H2O + H(+). It carries out the reaction vitamin D2 + reduced [NADPH--hemoprotein reductase] + O2 = 25-hydroxyvitamin D2 + oxidized [NADPH--hemoprotein reductase] + H2O + H(+). The catalysed reaction is 1alpha-hydroxyvitamin D2 + reduced [NADPH--hemoprotein reductase] + O2 = 1alpha,25-dihydroxyvitamin D2 + oxidized [NADPH--hemoprotein reductase] + H2O + H(+). It catalyses the reaction alfacalcidol + reduced [NADPH--hemoprotein reductase] + O2 = calcitriol + oxidized [NADPH--hemoprotein reductase] + H2O + H(+). It participates in hormone biosynthesis; vitamin D biosynthesis. A cytochrome P450 monooxygenase involved in activation of vitamin D precursors. Catalyzes hydroxylation at C-25 of both forms of vitamin D, vitamin D(2) and D(3) (calciol). Can metabolize vitamin D analogs/prodrugs 1alpha-hydroxyvitamin D(2) (doxercalciferol) and 1alpha-hydroxyvitamin D(3) (alfacalcidol) forming 25-hydroxy derivatives. Mechanistically, uses molecular oxygen inserting one oxygen atom into a substrate, and reducing the second into a water molecule, with two electrons provided by NADPH via cytochrome P450 reductase (CPR; NADPH-ferrihemoprotein reductase). This is Vitamin D 25-hydroxylase (CYP2R1) from Homo sapiens (Human).